A 221-amino-acid chain; its full sequence is MAGVGSAVRRLYLSVYNWAVFFGWAQVLYYAVTTLLESGHEAVYAAVERPLQFAQTAAFLEILHGLVGLVRSPVSATLPQIGSRLFLTWGILWSFPETHSHILVTSLVISWSITEIIRYSFFGMKEAFGFAPSWLLWLRYSTFMVLYPTGISSEVGLIYIALPYMKASEKYCLRMPNKWNFSFDFFYASILSLAIYVPGSPHMFTYMLAQRKKALAKAKAA.

The Cytoplasmic portion of the chain corresponds to 1-11 (MAGVGSAVRRL). The chain crosses the membrane as a helical span at residues 12 to 32 (YLSVYNWAVFFGWAQVLYYAV). Residues 33–51 (TTLLESGHEAVYAAVERPL) lie on the Lumenal side of the membrane. A helical transmembrane segment spans residues 52–70 (QFAQTAAFLEILHGLVGLV). Over 71–76 (RSPVSA) the chain is Cytoplasmic. Residues 77-95 (TLPQIGSRLFLTWGILWSF) traverse the membrane as a helical segment. The Lumenal segment spans residues 96–100 (PETHS). Residues 101–121 (HILVTSLVISWSITEIIRYSF) traverse the membrane as a helical segment. Residues 122–141 (FGMKEAFGFAPSWLLWLRYS) lie on the Cytoplasmic side of the membrane. A helical transmembrane segment spans residues 142-165 (TFMVLYPTGISSEVGLIYIALPYM). Active-site residues include Y147 and E154. The Lumenal portion of the chain corresponds to 166-184 (KASEKYCLRMPNKWNFSFD). Residues 185-209 (FFYASILSLAIYVPGSPHMFTYMLA) form a helical membrane-spanning segment. The Cytoplasmic portion of the chain corresponds to 210–221 (QRKKALAKAKAA).

The protein belongs to the very long-chain fatty acids dehydratase HACD family.

Its subcellular location is the endoplasmic reticulum membrane. The enzyme catalyses a very-long-chain (3R)-3-hydroxyacyl-CoA = a very-long-chain (2E)-enoyl-CoA + H2O. The protein operates within lipid metabolism; fatty acid biosynthesis. In terms of biological role, catalyzes the third of the four reactions of the long-chain fatty acids elongation cycle. This endoplasmic reticulum-bound enzymatic process, allows the addition of two carbons to the chain of long- and very long-chain fatty acids/VLCFAs per cycle. This enzyme catalyzes the dehydration of the 3-hydroxyacyl-CoA intermediate into trans-2,3-enoyl-CoA, within each cycle of fatty acid elongation. Thereby, it participates in the production of VLCFAs of different chain lengths that are involved in multiple biological processes as precursors of membrane lipids and lipid mediators. May be an anti-phosphatase that prevents CDKA-1 dephosphorylation and activation. Involved in the hormonal control of cell division and differentiation. Required for proliferation control of meristematic and non-meristematic cells. Negative regulator of the cell cycle. This is Very-long-chain (3R)-3-hydroxyacyl-CoA dehydratase PASTICCINO 2A (PAS2A) from Oryza sativa subsp. japonica (Rice).